A 525-amino-acid chain; its full sequence is NGFI-A-binding protein 2 (525 aa).

The segment at 1 to 31 (MHRAPSPTAEQPPGRGDNTRRTPQPRFKASA) is disordered. A Phosphoserine modification is found at Ser6. The tract at residues 35–113 (ALPRTLGELQ…REWATNPGLF (79 aa)) is NCD1. The disordered stretch occupies residues 135–238 (GTRKGSMSNG…GAGGGPDRLE (104 aa)). A phosphoserine mark is found at Ser157, Ser159, Ser162, and Ser171. Positions 212-234 (AGGGVSEGPGVGGVAAGGAGGGP) are enriched in gly residues. Residues 267–356 (LLKLNKKLAR…SRQVARESTY (90 aa)) are NCD2. Residues 353–384 (ESTYLSSLKGSRLHSEELGGPPLKKLKQEVGE) are necessary for nuclear localization. Lys379 is covalently cross-linked (Glycyl lysine isopeptide (Lys-Gly) (interchain with G-Cter in SUMO1)). The interval 381-416 (EVGEQSHNEIQQPPPGPESYAPPYRPSLEEDSASLS) is disordered. Ser479 bears the Phosphoserine mark. Residues 501-525 (APGPHPALVEGRRSSVKVEAEASRQ) are disordered. The segment covering 510 to 525 (EGRRSSVKVEAEASRQ) has biased composition (basic and acidic residues). Lys517 participates in a covalent cross-link: Glycyl lysine isopeptide (Lys-Gly) (interchain with G-Cter in SUMO1); alternate. Lys517 is covalently cross-linked (Glycyl lysine isopeptide (Lys-Gly) (interchain with G-Cter in SUMO2); alternate).

This sequence belongs to the NAB family. Homomultimers may associate with EGR1 bound to DNA. Post-translationally, sumoylation by EGR2 represses EGR2 transcriptional activity in hindbrain. Highly expressed in brain and thymus, and at lower levels in spleen, kidney, heart and testis. Isoform 1 is predominantly expressed in testis, whereas isoform 3 is more abundant in thymus.

It localises to the nucleus. Its function is as follows. Acts as a transcriptional repressor for zinc finger transcription factors EGR1 and EGR2. Isoform 2 lacks repression ability. This chain is NGFI-A-binding protein 2 (Nab2), found in Mus musculus (Mouse).